The primary structure comprises 229 residues: Sperm-associated microtubule inner protein 5 (229 aa).

The tract at residues 181–201 (PEFSGPGQTPPSEDPQAPRPC) is disordered.

In terms of assembly, microtubule inner protein component of sperm flagellar doublet microtubules. As to expression, expressed in testis (at protein level).

The protein localises to the cytoplasm. The protein resides in the cytoskeleton. Its subcellular location is the flagellum axoneme. It localises to the nucleus. Functionally, microtubule inner protein (MIP) part of the dynein-decorated doublet microtubules (DMTs) in flagellum axoneme. May serve to reinforce and thus stabilize the microtubule structure in the sperm flagella. In Mus musculus (Mouse), this protein is Sperm-associated microtubule inner protein 5 (Spmip5).